The chain runs to 353 residues: Delta-aminolevulinic acid dehydratase (353 aa).

Lys-221 acts as the Schiff-base intermediate with substrate in catalysis. Arg-231 and Lys-244 together coordinate 5-aminolevulinate. Residue Glu-260 participates in Mg(2+) binding. Residue Lys-275 is the Schiff-base intermediate with substrate of the active site. 5-aminolevulinate is bound by residues Ser-301 and Tyr-340.

Belongs to the ALAD family. In terms of assembly, homooctamer. The cofactor is Mg(2+).

The catalysed reaction is 2 5-aminolevulinate = porphobilinogen + 2 H2O + H(+). Its pathway is porphyrin-containing compound metabolism; protoporphyrin-IX biosynthesis; coproporphyrinogen-III from 5-aminolevulinate: step 1/4. Its function is as follows. Catalyzes an early step in the biosynthesis of tetrapyrroles. Binds two molecules of 5-aminolevulinate per subunit, each at a distinct site, and catalyzes their condensation to form porphobilinogen. Required for nodule development. The polypeptide is Delta-aminolevulinic acid dehydratase (hemB) (Bradyrhizobium diazoefficiens (strain JCM 10833 / BCRC 13528 / IAM 13628 / NBRC 14792 / USDA 110)).